A 334-amino-acid polypeptide reads, in one-letter code: Succinylglutamate desuccinylase (334 aa).

Histidine 59, glutamate 62, and histidine 151 together coordinate Zn(2+). Residue glutamate 215 is part of the active site.

The protein belongs to the AspA/AstE family. Succinylglutamate desuccinylase subfamily. Requires Zn(2+) as cofactor.

The enzyme catalyses N-succinyl-L-glutamate + H2O = L-glutamate + succinate. The protein operates within amino-acid degradation; L-arginine degradation via AST pathway; L-glutamate and succinate from L-arginine: step 5/5. Functionally, transforms N(2)-succinylglutamate into succinate and glutamate. This is Succinylglutamate desuccinylase from Pseudomonas fluorescens (strain SBW25).